The chain runs to 68 residues: Conotoxin Cal14.13c (68 aa).

Residues 1 to 20 form the signal peptide; that stretch reads MKLCVVXVLLMLAMPFNGGE. Positions 21 to 68 are excised as a propeptide; sequence ASRFFNQHARSQRSGMKTRGIWCDPPCPEGETCRGGECSDEFNGDLGG. At leucine 66 the chain carries Leucine amide.

Contains 2 disulfide bonds. In terms of tissue distribution, expressed by the venom duct.

It is found in the secreted. Its function is as follows. Probable neurotoxin with unknown target. Possibly targets ion channels. The chain is Conotoxin Cal14.13c from Californiconus californicus (California cone).